We begin with the raw amino-acid sequence, 89 residues long: Protein M7 (89 aa).

Positions 1 to 25 (MAAMKSLATAILVVLLLRRLPRGLS) are cleaved as a signal peptide. 4 disulfide bridges follow: Cys-28-Cys-65, Cys-38-Cys-54, Cys-55-Cys-80, and Cys-67-Cys-87.

It belongs to the A9/FIL1 family. As to expression, tapetum of anthers.

The protein resides in the secreted. The sequence is that of Protein M7 (M7) from Lilium henryi (Henry's lily).